Reading from the N-terminus, the 123-residue chain is UPF0102 protein DR_2282 (123 aa).

The protein belongs to the UPF0102 family.

This chain is UPF0102 protein DR_2282, found in Deinococcus radiodurans (strain ATCC 13939 / DSM 20539 / JCM 16871 / CCUG 27074 / LMG 4051 / NBRC 15346 / NCIMB 9279 / VKM B-1422 / R1).